A 947-amino-acid chain; its full sequence is Beta-glucosidase (947 aa).

Asp-696 is an active-site residue.

Belongs to the glycosyl hydrolase 3 family.

It catalyses the reaction Hydrolysis of terminal, non-reducing beta-D-glucosyl residues with release of beta-D-glucose.. The protein operates within glycan metabolism; cellulose degradation. This is Beta-glucosidase from Ruminococcus albus.